Here is a 319-residue protein sequence, read N- to C-terminus: tRNA-cytidine(32) 2-sulfurtransferase (319 aa).

Positions 43–48 match the PP-loop motif motif; that stretch reads SGGKDS. Cys118, Cys121, and Cys209 together coordinate [4Fe-4S] cluster.

The protein belongs to the TtcA family. Homodimer. Requires Mg(2+) as cofactor. [4Fe-4S] cluster serves as cofactor.

It is found in the cytoplasm. The enzyme catalyses cytidine(32) in tRNA + S-sulfanyl-L-cysteinyl-[cysteine desulfurase] + AH2 + ATP = 2-thiocytidine(32) in tRNA + L-cysteinyl-[cysteine desulfurase] + A + AMP + diphosphate + H(+). It functions in the pathway tRNA modification. Its function is as follows. Catalyzes the ATP-dependent 2-thiolation of cytidine in position 32 of tRNA, to form 2-thiocytidine (s(2)C32). The sulfur atoms are provided by the cysteine/cysteine desulfurase (IscS) system. The sequence is that of tRNA-cytidine(32) 2-sulfurtransferase from Neisseria gonorrhoeae (strain NCCP11945).